Reading from the N-terminus, the 168-residue chain is Nucleoside deoxyribosyltransferase (168 aa).

Glutamate 103 acts as the Nucleophile in catalysis.

It belongs to the nucleoside deoxyribosyltransferase family.

It carries out the reaction 2-deoxy-D-ribosyl-base(1) + base(2) = 2-deoxy-D-ribosyl-base(2) + base(1).. It functions in the pathway nucleotide metabolism; nucleotide salvage pathway. Catalyzes the cleavage of the glycosidic bond of 2'-deoxyribonucleosides and the transfer of the deoxyribosyl moiety to an acceptor purine or pyrimidine base. This is Nucleoside deoxyribosyltransferase (ntd) from Limosilactobacillus fermentum (Lactobacillus fermentum).